The chain runs to 253 residues: MSGHNKWANIKHRKMAQDAKKSQLFTKLIRELIVAAREGGGDPETNSRLRTAIEKAKEANMPRENIEKAIKRGTGELEGVEYQEIIYEAYGPGGVALYIRALTDNKNRTAQELRHVLSRHGGSLADLGAVGWIFERKGIISVPRDQVANVEELVMMAIDAGAEDIDDQDDPVRITTSPDNLMSVKEELEKNGYKAEAGISYVPKNTVQVTGKDAEKILALLNALEDMDDVQDVYSNFEMDDAEMEAILSQMNQ.

It belongs to the TACO1 family.

It is found in the cytoplasm. This is Probable transcriptional regulatory protein Tlet_1011 from Pseudothermotoga lettingae (strain ATCC BAA-301 / DSM 14385 / NBRC 107922 / TMO) (Thermotoga lettingae).